A 105-amino-acid chain; its full sequence is MNEFLSLLSRAQTILLMLRLAVTAVAVFLAIVAWTKTRTQETVCFIAGVLCMYLAQLFAFLRAAGFSITRYTPVPGVSLVGFTLELLPLACFIASLIFTIKRHSI.

A run of 3 helical transmembrane segments spans residues 14 to 34, 41 to 61, and 80 to 100; these read ILLMLRLAVTAVAVFLAIVAW, ETVCFIAGVLCMYLAQLFAFL, and VGFTLELLPLACFIASLIFTI.

It localises to the cell membrane. This is an uncharacterized protein from Treponema pallidum (strain Nichols).